The sequence spans 154 residues: Endoribonuclease YbeY (154 aa).

Positions 114, 118, and 124 each coordinate Zn(2+).

It belongs to the endoribonuclease YbeY family. Zn(2+) is required as a cofactor.

Its subcellular location is the cytoplasm. Single strand-specific metallo-endoribonuclease involved in late-stage 70S ribosome quality control and in maturation of the 3' terminus of the 16S rRNA. The polypeptide is Endoribonuclease YbeY (Haemophilus influenzae (strain ATCC 51907 / DSM 11121 / KW20 / Rd)).